The chain runs to 351 residues: Glycerol-1-phosphate dehydrogenase [NAD(P)+] (351 aa).

NAD(+) is bound by residues 97 to 101 (GKVID) and 119 to 122 (TSPS). D124 serves as a coordination point for substrate. Residue S128 coordinates NAD(+). A substrate-binding site is contributed by D171. Zn(2+) contacts are provided by D171 and H251. Residue H255 coordinates substrate. H267 is a Zn(2+) binding site.

The protein belongs to the glycerol-1-phosphate dehydrogenase family. Homodimer. The cofactor is Zn(2+).

It localises to the cytoplasm. It catalyses the reaction sn-glycerol 1-phosphate + NAD(+) = dihydroxyacetone phosphate + NADH + H(+). The catalysed reaction is sn-glycerol 1-phosphate + NADP(+) = dihydroxyacetone phosphate + NADPH + H(+). It functions in the pathway membrane lipid metabolism; glycerophospholipid metabolism. Catalyzes the NAD(P)H-dependent reduction of dihydroxyacetonephosphate (DHAP or glycerone phosphate) to glycerol 1-phosphate (G1P). The G1P thus generated is used as the glycerophosphate backbone of phospholipids in the cellular membranes of Archaea. The chain is Glycerol-1-phosphate dehydrogenase [NAD(P)+] from Saccharolobus islandicus (strain M.16.27) (Sulfolobus islandicus).